A 102-amino-acid polypeptide reads, in one-letter code: Large ribosomal subunit protein uL24 (102 aa).

The protein belongs to the universal ribosomal protein uL24 family. As to quaternary structure, part of the 50S ribosomal subunit.

One of two assembly initiator proteins, it binds directly to the 5'-end of the 23S rRNA, where it nucleates assembly of the 50S subunit. In terms of biological role, one of the proteins that surrounds the polypeptide exit tunnel on the outside of the subunit. This chain is Large ribosomal subunit protein uL24, found in Finegoldia magna (strain ATCC 29328 / DSM 20472 / WAL 2508) (Peptostreptococcus magnus).